A 369-amino-acid chain; its full sequence is uncharacterized protein (369 aa).

Transmembrane regions (helical) follow at residues 25 to 45 (QWVI…TVHW), 47 to 67 (FGLL…LMPE), 119 to 139 (LNIV…FGVM), 152 to 172 (ITGF…FSAL), 206 to 226 (GALH…LFAI), 235 to 255 (LQAV…TLHL), 268 to 288 (LLFT…LPLI), 295 to 315 (LVGF…TTVF), and 323 to 343 (WVFY…GTVF).

The protein to B.subtilis ComEC.

The protein localises to the cell membrane. This is an uncharacterized protein from Mycoplasma pneumoniae (strain ATCC 29342 / M129 / Subtype 1) (Mycoplasmoides pneumoniae).